The sequence spans 356 residues: UDP-N-acetylglucosamine--N-acetylmuramyl-(pentapeptide) pyrophosphoryl-undecaprenol N-acetylglucosamine transferase (356 aa).

UDP-N-acetyl-alpha-D-glucosamine contacts are provided by residues 12 to 14, asparagine 124, arginine 163, serine 188, isoleucine 242, 261 to 266, and glutamine 287; these read TGG and ALTVSE.

Belongs to the glycosyltransferase 28 family. MurG subfamily.

Its subcellular location is the cell inner membrane. The enzyme catalyses di-trans,octa-cis-undecaprenyl diphospho-N-acetyl-alpha-D-muramoyl-L-alanyl-D-glutamyl-meso-2,6-diaminopimeloyl-D-alanyl-D-alanine + UDP-N-acetyl-alpha-D-glucosamine = di-trans,octa-cis-undecaprenyl diphospho-[N-acetyl-alpha-D-glucosaminyl-(1-&gt;4)]-N-acetyl-alpha-D-muramoyl-L-alanyl-D-glutamyl-meso-2,6-diaminopimeloyl-D-alanyl-D-alanine + UDP + H(+). The protein operates within cell wall biogenesis; peptidoglycan biosynthesis. Its function is as follows. Cell wall formation. Catalyzes the transfer of a GlcNAc subunit on undecaprenyl-pyrophosphoryl-MurNAc-pentapeptide (lipid intermediate I) to form undecaprenyl-pyrophosphoryl-MurNAc-(pentapeptide)GlcNAc (lipid intermediate II). The chain is UDP-N-acetylglucosamine--N-acetylmuramyl-(pentapeptide) pyrophosphoryl-undecaprenol N-acetylglucosamine transferase from Pseudomonas fluorescens (strain SBW25).